We begin with the raw amino-acid sequence, 608 residues long: Leucine aminopeptidase 2 (608 aa).

Substrate-binding positions include 134–136 (QCQ) and 269–274 (PYGGME). Residue H298 participates in Zn(2+) binding. E299 functions as the Proton acceptor in the catalytic mechanism. Positions 302 and 321 each coordinate Zn(2+). Y386 serves as the catalytic Proton donor.

It belongs to the peptidase M1 family. Requires Zn(2+) as cofactor.

The protein resides in the cytoplasm. The protein localises to the nucleus. It catalyses the reaction an epoxide + H2O = an ethanediol. Its function is as follows. Aminopeptidase that preferentially cleaves di- and tripeptides. Also has low epoxide hydrolase activity (in vitro). Can hydrolyze the epoxide leukotriene LTA(4) but it forms preferentially 5,6-dihydroxy-7,9,11,14-eicosatetraenoic acid rather than the cytokine leukotriene B(4) as the product compared to the homologous mammalian enzyme (in vitro). This chain is Leucine aminopeptidase 2, found in Sclerotinia sclerotiorum (strain ATCC 18683 / 1980 / Ss-1) (White mold).